The sequence spans 345 residues: Centromere protein U (345 aa).

Basic residues-rich tracts occupy residues 1–10 (MSSKKRTKRN) and 19–29 (HKGRSHPRRKF). Disordered stretches follow at residues 1–37 (MSSK…EPDV) and 64–153 (AVDA…SSVQ). Residues 88 to 106 (NAERSEKMLLETPEGDVHE) are compositionally biased toward basic and acidic residues. A compositionally biased stretch (low complexity) spans 142–152 (SDSSVNSPSSV). Positions 201 to 294 (CSAFEDQVTD…QDYLDYREEN (94 aa)) form a coiled coil. Positions 222–239 (KKKNAKVVADIKKKRQRL) match the Nuclear localization signal motif.

The protein belongs to the CENP-U/AME1 family. As to quaternary structure, interacts with CENPH-CENPI complex at the kinetochore.

The protein resides in the nucleus. Its subcellular location is the chromosome. The protein localises to the centromere. Functionally, probable component of a centromeric complex involved in assembly of kinetochore proteins, mitotic progression and chromosome segregation. Required for maintenance of sister chromatid adhesion during mitotic checkpoint activation. The chain is Centromere protein U (CENPU) from Gallus gallus (Chicken).